The chain runs to 387 residues: UDP-N-acetylglucosamine--N-acetylmuramyl-(pentapeptide) pyrophosphoryl-undecaprenol N-acetylglucosamine transferase (387 aa).

UDP-N-acetyl-alpha-D-glucosamine-binding positions include Thr-14–Gly-16, Asn-124, Arg-167, Ser-195, and Gln-296. A disordered region spans residues Leu-366–Ala-387. Basic and acidic residues predominate over residues Thr-377–Ala-387.

Belongs to the glycosyltransferase 28 family. MurG subfamily.

It is found in the cell inner membrane. It carries out the reaction di-trans,octa-cis-undecaprenyl diphospho-N-acetyl-alpha-D-muramoyl-L-alanyl-D-glutamyl-meso-2,6-diaminopimeloyl-D-alanyl-D-alanine + UDP-N-acetyl-alpha-D-glucosamine = di-trans,octa-cis-undecaprenyl diphospho-[N-acetyl-alpha-D-glucosaminyl-(1-&gt;4)]-N-acetyl-alpha-D-muramoyl-L-alanyl-D-glutamyl-meso-2,6-diaminopimeloyl-D-alanyl-D-alanine + UDP + H(+). It functions in the pathway cell wall biogenesis; peptidoglycan biosynthesis. Functionally, cell wall formation. Catalyzes the transfer of a GlcNAc subunit on undecaprenyl-pyrophosphoryl-MurNAc-pentapeptide (lipid intermediate I) to form undecaprenyl-pyrophosphoryl-MurNAc-(pentapeptide)GlcNAc (lipid intermediate II). This chain is UDP-N-acetylglucosamine--N-acetylmuramyl-(pentapeptide) pyrophosphoryl-undecaprenol N-acetylglucosamine transferase, found in Zymomonas mobilis subsp. mobilis (strain ATCC 31821 / ZM4 / CP4).